The chain runs to 513 residues: Na(+)/H(+) antiporter NhaB (513 aa).

The next 12 helical transmembrane spans lie at 23–43 (LALIIFLIVNPLIFLISPFVA), 52–72 (IFTLAMALKCYPLLPGGLLAI), 97–117 (LLLMFMVAGIYFMKQLLLFIF), 120–140 (LLLSIRSKMLLSLSFCVAAAF), 144–164 (FLDALTVVAVVISVAVGFYGI), 202–222 (LMMHAGVGTALGGVMTMVGEP), 238–258 (FFLRMSPVTVPVLICGLLTCL), 303–323 (AIIGVWLVTALALHLAEVGLI), 348–368 (TESLPFTALLTVFFSVVAVII), 391–411 (LFYIFNGLLSSISDNVFVGTI), 447–467 (ATPNGQAAFLFLLTSALAPLI), and 475–495 (VWMALPYTLVLTLVGLLCVEF).

This sequence belongs to the NhaB Na(+)/H(+) (TC 2.A.34) antiporter family.

The protein localises to the cell inner membrane. It carries out the reaction 2 Na(+)(in) + 3 H(+)(out) = 2 Na(+)(out) + 3 H(+)(in). In terms of biological role, na(+)/H(+) antiporter that extrudes sodium in exchange for external protons. This Escherichia coli O45:K1 (strain S88 / ExPEC) protein is Na(+)/H(+) antiporter NhaB.